The primary structure comprises 2350 residues: Probable JmjC domain-containing histone demethylation protein 2C (2350 aa).

Disordered stretches follow at residues 96-302 and 314-336; these read TRAQ…LQEC and PKDR…NDTH. A compositionally biased stretch (polar residues) spans 98-127; that stretch reads AQANSPRPAMNSQAAVPKQNTHQQQQQRSI. S135 and S138 each carry phosphoserine. Residues 141–160 are compositionally biased toward basic and acidic residues; the sequence is DEEKMKEDKYDCVSRGENPK. Over residues 161–171 the composition is skewed to basic residues; that stretch reads GKNKHVVTKRR. Residues 172-189 are compositionally biased toward basic and acidic residues; sequence KPEEAEKRLSMKRLRTDN. A compositionally biased stretch (low complexity) spans 190 to 200; the sequence is ASDASESSDAE. Phosphoserine occurs at positions 191 and 194. Residues 257–280 are compositionally biased toward basic and acidic residues; that stretch reads QEDKNHNEGEKPKSTDSHLQDKMT. Residues 281-302 are compositionally biased toward polar residues; sequence LRSSEQATVADHNSNDSVLQEC. 2 positions are modified to phosphoserine: S294 and S320. T324 bears the Phosphothreonine mark. A phosphoserine mark is found at S420, S436, S457, S458, S460, S471, and S762. Disordered regions lie at residues 426–486, 747–766, 859–883, 1030–1083, and 1422–1508; these read SVTE…NSQA, SSAE…PPLT, RENY…DKDV, RKES…DQSL, and EKVS…VPRS. Low complexity-rich tracts occupy residues 863–874 and 1034–1045; these read SRVVPSSSSPKS and SYSSLSPPTLTP. Residues 1071–1083 show a composition bias toward polar residues; it reads SQSNFKNSSDQSL. Residues 1454–1463 are compositionally biased toward basic residues; sequence KRQPKPTYKK. Over residues 1464–1480 the composition is skewed to basic and acidic residues; sequence KQNDLQKRKGEVEEDSK. The segment at 1657–1682 adopts a C6-type zinc-finger fold; the sequence is CDACEATLFNVHWVCRKCGFVACLDC. The span at 1776 to 1818 shows a compositional bias: polar residues; sequence KTSVSLPESQQQNSPQKSQTNGNSSPGSASTDSRLTPPESQSP. The disordered stretch occupies residues 1776-1874; the sequence is KTSVSLPESQ…PASQSNEQGS (99 aa). S1800 bears the Phosphoserine mark. Basic and acidic residues predominate over residues 1826-1849; the sequence is AEQKSREEKQENKEFTLEREIKED. The span at 1855-1874 shows a compositional bias: polar residues; that stretch reads SDSPNGSTSPPASQSNEQGS. Residues 1876-1880 carry the LXXLL motif motif; that stretch reads LRDLL. Residues 1933–1962 are disordered; the sequence is PNKTSKINIKSEPNEEPKESSLPATDESNK. Residue K1942 forms a Glycyl lysine isopeptide (Lys-Gly) (interchain with G-Cter in SUMO2) linkage. The region spanning 2084 to 2308 is the JmjC domain; the sequence is MPTRYEDFLR…QSFHLTQELR (225 aa). Residues H2146, E2148, and H2276 each contribute to the Fe cation site.

Belongs to the JHDM2 histone demethylase family. The cofactor is Fe(2+).

Its subcellular location is the nucleus. Functionally, probable histone demethylase that specifically demethylates 'Lys-9' of histone H3, thereby playing a central role in histone code. Demethylation of Lys residue generates formaldehyde and succinate. May be involved in hormone-dependent transcriptional activation, by participating in recruitment to androgen-receptor target genes. In Mus musculus (Mouse), this protein is Probable JmjC domain-containing histone demethylation protein 2C (Jmjd1c).